We begin with the raw amino-acid sequence, 763 residues long: ATP-dependent Clp protease ATP-binding subunit ClpL (763 aa).

An i region spans residues 136–386; the sequence is IEKLGTNLTE…FSGKNSQTDV (251 aa). ATP is bound by residues 181–188 and 511–518; these read GESGVGKT and GPTGVGKT. The tract at residues 437 to 629 is II; it reads ATIDDVAQSV…IIIMTSNAGF (193 aa).

It belongs to the ClpA/ClpB family.

Could be the ATP-dependent specificity component of an ATP-dependent protease. The chain is ATP-dependent Clp protease ATP-binding subunit ClpL (clpL) from Lactococcus lactis subsp. lactis (Streptococcus lactis).